Reading from the N-terminus, the 271-residue chain is MTERVRVAITGGSGRMGRTLIEAAKQNGIILLGAAIERAGSTLMGVDAGELAGVGSMNVAITDSLDKAVNDFDVLIDFTSPEASVFHTDWCAKNGKAIVIGTTGFNHAQKEQISAYADQIPIVMAPNMAVGVNLMWKLLEVTAEVMGHYCDIEIIEGHHRYKKDAPSGTALKMGEVIAETLGRDLEKCAVYGREGMTGERDRETIGFATVRAGDIVGEHTALFADIGERLEITHKASSRMTFANGAMRAATWLVEQDAGLYDMQQVLGLKA.

Residues glycine 11–methionine 16 and glutamate 37 contribute to the NAD(+) site. Arginine 38 provides a ligand contact to NADP(+). Residues glycine 101–threonine 103 and alanine 125–methionine 128 contribute to the NAD(+) site. The active-site Proton donor/acceptor is histidine 158. Residue histidine 159 coordinates (S)-2,3,4,5-tetrahydrodipicolinate. Catalysis depends on lysine 162, which acts as the Proton donor. Glycine 168–threonine 169 provides a ligand contact to (S)-2,3,4,5-tetrahydrodipicolinate.

Belongs to the DapB family.

The protein resides in the cytoplasm. It carries out the reaction (S)-2,3,4,5-tetrahydrodipicolinate + NAD(+) + H2O = (2S,4S)-4-hydroxy-2,3,4,5-tetrahydrodipicolinate + NADH + H(+). The enzyme catalyses (S)-2,3,4,5-tetrahydrodipicolinate + NADP(+) + H2O = (2S,4S)-4-hydroxy-2,3,4,5-tetrahydrodipicolinate + NADPH + H(+). It functions in the pathway amino-acid biosynthesis; L-lysine biosynthesis via DAP pathway; (S)-tetrahydrodipicolinate from L-aspartate: step 4/4. Catalyzes the conversion of 4-hydroxy-tetrahydrodipicolinate (HTPA) to tetrahydrodipicolinate. This Shewanella halifaxensis (strain HAW-EB4) protein is 4-hydroxy-tetrahydrodipicolinate reductase.